Consider the following 149-residue polypeptide: Calmodulin-6 (149 aa).

4 EF-hand domains span residues aspartate 8–asparagine 43, proline 44–aspartate 79, aspartate 81–lysine 116, and leucine 117–lysine 149. Ca(2+) is bound by residues aspartate 21, aspartate 23, aspartate 25, cysteine 27, glutamate 32, aspartate 57, aspartate 59, asparagine 61, threonine 63, glutamate 68, aspartate 94, aspartate 96, asparagine 98, glutamate 105, aspartate 130, aspartate 132, aspartate 134, glutamine 136, and glutamate 141.

This sequence belongs to the calmodulin family. In terms of assembly, interacts with KCBP.

Functionally, calmodulin mediates the control of a large number of enzymes, ion channels and other proteins by Ca(2+). Among the enzymes to be stimulated by the calmodulin-Ca(2+) complex are a number of protein kinases and phosphatases. The polypeptide is Calmodulin-6 (CAM6) (Arabidopsis thaliana (Mouse-ear cress)).